The sequence spans 236 residues: Small ribosomal subunit protein uS2c (236 aa).

The protein belongs to the universal ribosomal protein uS2 family.

The protein resides in the plastid. Its subcellular location is the chloroplast. This Aethionema grandiflorum (Persian stone-cress) protein is Small ribosomal subunit protein uS2c (rps2).